A 315-amino-acid chain; its full sequence is Glutamyl-Q tRNA(Asp) synthetase (315 aa).

L-glutamate is bound by residues 12–16 and E48; that span reads RFAPS. The 'HIGH' region signature appears at 15–25; sequence PSPSGPLHFGS. Residues C104, C106, Y124, and C128 each coordinate Zn(2+). The L-glutamate site is built by Y181 and R199. A 'KMSKS' region motif is present at residues 237–241; it reads KLSKQ. Position 240 (K240) interacts with ATP.

The protein belongs to the class-I aminoacyl-tRNA synthetase family. GluQ subfamily. Zn(2+) serves as cofactor.

Functionally, catalyzes the tRNA-independent activation of glutamate in presence of ATP and the subsequent transfer of glutamate onto a tRNA(Asp). Glutamate is transferred on the 2-amino-5-(4,5-dihydroxy-2-cyclopenten-1-yl) moiety of the queuosine in the wobble position of the QUC anticodon. This chain is Glutamyl-Q tRNA(Asp) synthetase, found in Aromatoleum aromaticum (strain DSM 19018 / LMG 30748 / EbN1) (Azoarcus sp. (strain EbN1)).